The sequence spans 411 residues: MSQPLPPGWTEHKAPSGIPYYWNAELKKSTYQRPSFIEKNHSSSVTASQASLAFNTSEKLFVNENAEERKNSRDLRKQLPDRPKFKKRIPNNDSWVVVFTKKNRYFFHNLKSHESYWEPPLEISKDLKILRLPIRKQISKDSSQSQNVDSGKTNHEEIHESRHLQTEIEEPSGLEESSEESVLYSEEFYEKSDEEEDEEKSHSAEELEFGEEDIMYQLQQLDDETVSYDIQEQATNLSTDDARRVFTELLKDKNIGAYQPWELVYPKLLDDDRFYVLDSGERRKEVFEEYCKSVVSTKKITRRKNTLSDFWTLLHSLPSTLLWPQFKRKYRKSSTLQIPGYSERDFEKLFREFQILRKQPMQDKLLNFKKLCKSKTVDPKNPDEFTESILNDTRYAVLTREELDSLACSSN.

In terms of domain architecture, WW 1 spans 3 to 36 (QPLPPGWTEHKAPSGIPYYWNAELKKSTYQRPSF). Positions 65 to 84 (NAEERKNSRDLRKQLPDRPK) are disordered. Residues 66 to 83 (AEERKNSRDLRKQLPDRP) show a composition bias toward basic and acidic residues. Positions 89-122 (IPNNDSWVVVFTKKNRYFFHNLKSHESYWEPPLE) constitute a WW 2 domain. A disordered region spans residues 138-209 (ISKDSSQSQN…KSHSAEELEF (72 aa)). The segment covering 140–151 (KDSSQSQNVDSG) has biased composition (polar residues). Over residues 152-166 (KTNHEEIHESRHLQT) the composition is skewed to basic and acidic residues. Residues 167–179 (EIEEPSGLEESSE) show a composition bias toward acidic residues. Residues 239 to 293 (TDDARRVFTELLKDKNIGAYQPWELVYPKLLDDDRFYVLDSGERRKEVFEEYCKS) enclose the FF domain.

Component of the spliceosomal complex. Interacts with prp19.

Its subcellular location is the nucleus. Functionally, component of the spliceosome involved in mRNA processing. This Schizosaccharomyces pombe (strain 972 / ATCC 24843) (Fission yeast) protein is Pre-mRNA-splicing factor dre4 (dre4).